We begin with the raw amino-acid sequence, 503 residues long: Annexin A11 (503 aa).

Pro residues-rich tracts occupy residues 80–117 and 123–167; these read GYPPVPPGGFGQPPPAQQPVPPYGMYPPPGGNPPPGMP and PGAP…PVPS. Residues 80–172 are disordered; the sequence is GYPPVPPGGF…QPVPSYPGYS (93 aa). 4 Annexin repeats span residues 198 to 269, 270 to 341, 353 to 425, and 429 to 500; these read FDPL…ALMK, TPVL…SLSQ, SLVQ…AVVK, and NTPA…KICG. 2 positions are modified to N6-acetyllysine: Lys-246 and Lys-253. An N6-acetyllysine modification is found at Lys-477.

Belongs to the annexin family. As to quaternary structure, interacts with S100A6. Interacts with PDCD6 in a calcium-dependent manner. Interacts with KIF23 during cytokinesis.

The protein resides in the cytoplasm. The protein localises to the melanosome. It is found in the nucleus envelope. It localises to the nucleus. Its subcellular location is the nucleoplasm. The protein resides in the cytoskeleton. The protein localises to the spindle. Functionally, required for midbody formation and completion of the terminal phase of cytokinesis. Binds specifically to calcyclin in a calcium-dependent manner. This is Annexin A11 (Anxa11) from Mus musculus (Mouse).